A 1318-amino-acid chain; its full sequence is Putative tetratricopeptide repeat protein 41 (1318 aa).

TPR repeat units lie at residues 399 to 432, 653 to 684, 817 to 850, 858 to 891, 991 to 1027, and 1045 to 1082; these read TQLETDILNEDSDGLVFSFLVEVFIASISLKPCI, WVQEKPNGLLYFWHQSLSAVEHKLLGVITPVE, CRLMFFIGSFLKFMGKTNEAEELFLSVEDMLVQS, LKVQNAIGELYLETGMTQEGFQYFQKAWSSMLRL, MEFLADLLFFPQRDSKKSQRKQVLKYYKQVIKIKENA, and SDTLCKLAGHLLASDSCHHVMIEAVGYLYRSVDLRVIH.

The protein localises to the cytoplasm. This Homo sapiens (Human) protein is Putative tetratricopeptide repeat protein 41.